Here is a 374-residue protein sequence, read N- to C-terminus: Probable trehalose-phosphate phosphatase 9 (374 aa).

This sequence belongs to the trehalose phosphatase family. A divalent metal cation serves as cofactor.

It catalyses the reaction alpha,alpha-trehalose 6-phosphate + H2O = alpha,alpha-trehalose + phosphate. It functions in the pathway glycan biosynthesis; trehalose biosynthesis. Functionally, removes the phosphate from trehalose 6-phosphate to produce free trehalose. Trehalose accumulation in plant may improve abiotic stress tolerance. The polypeptide is Probable trehalose-phosphate phosphatase 9 (TPP9) (Oryza sativa subsp. japonica (Rice)).